A 165-amino-acid chain; its full sequence is Transcription factor zip-10 (165 aa).

The segment covering 53–71 (ASLGTSTTSSSRCSSTESS) has biased composition (low complexity). The interval 53–99 (ASLGTSTTSSSRCSSTESSAAPGKIRRGRPQQEIADGQDAHSQKKRH) is disordered. Residues 104 to 150 (ARQYRAQMRQKVENVKSLHDEKEQLELEVKALRQAVSGLQQENAQKD) adopt a coiled-coil conformation.

It localises to the nucleus. Its function is as follows. Transcription factor that regulates the expression of genes in response to changes in temperature. In particular, binds to the promoter region of genes such as asp-17 in response to severe cold to warm temperature transitions to promote gene expression. Promotes stress-induced death, particularly in older animals, following cold shock followed by warming and this may have evolved as a form of kin survival under thermal stress conditions, favoring the survival of younger animals. This is Transcription factor zip-10 from Caenorhabditis elegans.